A 464-amino-acid polypeptide reads, in one-letter code: UDP-glycosyltransferase 76F2 (464 aa).

Residues serine 279, 338–340, 355–363, and 377–380 each bind UDP-alpha-D-glucose; these read VNQ, HCGWNSTIE, and FSDQ.

Belongs to the UDP-glycosyltransferase family.

The chain is UDP-glycosyltransferase 76F2 (UGT76F2) from Arabidopsis thaliana (Mouse-ear cress).